We begin with the raw amino-acid sequence, 278 residues long: Rhamnulose-1-phosphate aldolase (278 aa).

Glutamate 116 is a catalytic residue. The Zn(2+) site is built by histidine 139, histidine 141, and histidine 210.

This sequence belongs to the aldolase class II family. RhaD subfamily. Zn(2+) serves as cofactor.

The protein resides in the cytoplasm. It carries out the reaction L-rhamnulose 1-phosphate = (S)-lactaldehyde + dihydroxyacetone phosphate. It functions in the pathway carbohydrate degradation; L-rhamnose degradation; glycerone phosphate from L-rhamnose: step 3/3. Catalyzes the reversible cleavage of L-rhamnulose-1-phosphate to dihydroxyacetone phosphate (DHAP) and L-lactaldehyde. This chain is Rhamnulose-1-phosphate aldolase, found in Listeria welshimeri serovar 6b (strain ATCC 35897 / DSM 20650 / CCUG 15529 / CIP 8149 / NCTC 11857 / SLCC 5334 / V8).